The chain runs to 419 residues: L-rhamnose isomerase (419 aa).

Mn(2+) is bound by residues His-262, Asp-294, and Asp-296.

The protein belongs to the rhamnose isomerase family. In terms of assembly, homotetramer. Mn(2+) serves as cofactor.

The protein resides in the cytoplasm. The enzyme catalyses L-rhamnopyranose = L-rhamnulose. It functions in the pathway carbohydrate degradation; L-rhamnose degradation; glycerone phosphate from L-rhamnose: step 1/3. In terms of biological role, catalyzes the interconversion of L-rhamnose and L-rhamnulose. This Shigella boydii serotype 4 (strain Sb227) protein is L-rhamnose isomerase.